Reading from the N-terminus, the 147-residue chain is 3-dehydroquinate dehydratase (147 aa).

Tyrosine 25 acts as the Proton acceptor in catalysis. Substrate-binding residues include asparagine 76, histidine 82, and aspartate 89. Histidine 102 serves as the catalytic Proton donor. Substrate-binding positions include 103–104 and arginine 113; that span reads LS.

It belongs to the type-II 3-dehydroquinase family. In terms of assembly, homododecamer.

The enzyme catalyses 3-dehydroquinate = 3-dehydroshikimate + H2O. It functions in the pathway metabolic intermediate biosynthesis; chorismate biosynthesis; chorismate from D-erythrose 4-phosphate and phosphoenolpyruvate: step 3/7. Functionally, catalyzes a trans-dehydration via an enolate intermediate. The chain is 3-dehydroquinate dehydratase from Nostoc sp. (strain PCC 7120 / SAG 25.82 / UTEX 2576).